The sequence spans 664 residues: Alpha-1,4-glucan:maltose-1-phosphate maltosyltransferase (664 aa).

Alpha-maltose 1-phosphate is bound by residues Lys-261, Gln-321, and Asp-356. The active-site Nucleophile is the Asp-393. Asn-394 serves as a coordination point for alpha-maltose 1-phosphate. Glu-422 serves as the catalytic Proton donor. Residue Lys-533 to Tyr-534 coordinates alpha-maltose 1-phosphate.

It belongs to the glycosyl hydrolase 13 family. GlgE subfamily. As to quaternary structure, homodimer.

The catalysed reaction is alpha-maltose 1-phosphate + [(1-&gt;4)-alpha-D-glucosyl](n) = [(1-&gt;4)-alpha-D-glucosyl](n+2) + phosphate. Functionally, maltosyltransferase that uses maltose 1-phosphate (M1P) as the sugar donor to elongate linear or branched alpha-(1-&gt;4)-glucans. Is involved in a branched alpha-glucan biosynthetic pathway from trehalose, together with TreS, Mak and GlgB. This is Alpha-1,4-glucan:maltose-1-phosphate maltosyltransferase from Pseudomonas aeruginosa (strain ATCC 15692 / DSM 22644 / CIP 104116 / JCM 14847 / LMG 12228 / 1C / PRS 101 / PAO1).